Reading from the N-terminus, the 228-residue chain is UPF0173 metal-dependent hydrolase lmo1577 (228 aa).

This sequence belongs to the UPF0173 family.

The sequence is that of UPF0173 metal-dependent hydrolase lmo1577 from Listeria monocytogenes serovar 1/2a (strain ATCC BAA-679 / EGD-e).